The primary structure comprises 316 residues: Aspartate carbamoyltransferase catalytic subunit (316 aa).

Residues arginine 66 and threonine 67 each coordinate carbamoyl phosphate. L-aspartate is bound at residue lysine 94. Carbamoyl phosphate is bound by residues arginine 116, histidine 146, and glutamine 149. L-aspartate is bound by residues arginine 179 and arginine 234. Carbamoyl phosphate is bound by residues glycine 275 and proline 276.

It belongs to the aspartate/ornithine carbamoyltransferase superfamily. ATCase family. Heterododecamer (2C3:3R2) of six catalytic PyrB chains organized as two trimers (C3), and six regulatory PyrI chains organized as three dimers (R2).

The catalysed reaction is carbamoyl phosphate + L-aspartate = N-carbamoyl-L-aspartate + phosphate + H(+). It participates in pyrimidine metabolism; UMP biosynthesis via de novo pathway; (S)-dihydroorotate from bicarbonate: step 2/3. Catalyzes the condensation of carbamoyl phosphate and aspartate to form carbamoyl aspartate and inorganic phosphate, the committed step in the de novo pyrimidine nucleotide biosynthesis pathway. The sequence is that of Aspartate carbamoyltransferase catalytic subunit from Nitrosomonas eutropha (strain DSM 101675 / C91 / Nm57).